Reading from the N-terminus, the 377-residue chain is Adenosine 3'-phospho 5'-phosphosulfate transporter 2 (377 aa).

A run of 10 helical transmembrane segments spans residues 50 to 70 (LCCG…ELIF), 77 to 97 (PYGW…GYIE), 115 to 135 (ALLA…VGYL), 138 to 158 (PTQV…SVLI), 164 to 184 (GPMD…FTLA), 195 to 215 (FGVF…NVQE), 228 to 248 (VVIY…LLSG), 266 to 286 (GYAF…LTLV), 293 to 313 (LAAT…FVFF), and 317 to 337 (FTIQ…LNVY).

It belongs to the nucleotide-sugar transporter family. SLC35B subfamily.

It localises to the golgi apparatus membrane. Mediates the transport of adenosine 3'-phospho 5'-phosphosulfate (PAPS), from cytosol into Golgi. PAPS is a universal sulfuryl donor for sulfation events that take place in the Golgi. Essential for viability. Involved in glycosaminoglycan synthesis and the subsequent signaling. May be involved in hh and dpp signaling by controlling the sulfation of heparan sulfate (HS). This Anopheles gambiae (African malaria mosquito) protein is Adenosine 3'-phospho 5'-phosphosulfate transporter 2.